The sequence spans 1031 residues: Putative glycine dehydrogenase (decarboxylating), mitochondrial (1031 aa).

The N-terminal 49 residues, 1–49 (MFDSFMKRNQLALIMFRACSKLQYHGVNTSLSRHLFLAKRNLSISSACL), are a transit peptide targeting the mitochondrion. N6-(pyridoxal phosphate)lysine is present on Lys-783.

The protein belongs to the GcvP family. It depends on pyridoxal 5'-phosphate as a cofactor.

The protein localises to the mitochondrion. The catalysed reaction is N(6)-[(R)-lipoyl]-L-lysyl-[glycine-cleavage complex H protein] + glycine + H(+) = N(6)-[(R)-S(8)-aminomethyldihydrolipoyl]-L-lysyl-[glycine-cleavage complex H protein] + CO2. In terms of biological role, the glycine cleavage system catalyzes the degradation of glycine. The P protein binds the alpha-amino group of glycine through its pyridoxal phosphate cofactor; CO(2) is released and the remaining methylamine moiety is then transferred to the lipoamide cofactor of the H protein. The polypeptide is Putative glycine dehydrogenase (decarboxylating), mitochondrial (gcv2) (Schizosaccharomyces pombe (strain 972 / ATCC 24843) (Fission yeast)).